Consider the following 288-residue polypeptide: Bis(5'-nucleosyl)-tetraphosphatase, symmetrical (288 aa).

It belongs to the Ap4A hydrolase family.

It carries out the reaction P(1),P(4)-bis(5'-adenosyl) tetraphosphate + H2O = 2 ADP + 2 H(+). Its function is as follows. Hydrolyzes diadenosine 5',5'''-P1,P4-tetraphosphate to yield ADP. The protein is Bis(5'-nucleosyl)-tetraphosphatase, symmetrical of Pseudomonas putida (strain ATCC 700007 / DSM 6899 / JCM 31910 / BCRC 17059 / LMG 24140 / F1).